The chain runs to 172 residues: MVDKRESYTKEDLLASSRGELFGKEGPQLPAPNMLMMDRVVKMTDDGGNYNKGFVEAELDIHPDMWFFGCHFIGDPVMPGCLGLDAMWQLVGFYLGWLGGKGKGRALGVGEVKFTGQILPSAKKVTYRIHFRRVINRKLVMGMADGEVLCDGTVIYTASDLKVGLFKDTAAF.

The active site involves histidine 71.

This sequence belongs to the thioester dehydratase family. FabA subfamily. Homodimer.

It localises to the cytoplasm. It catalyses the reaction a (3R)-hydroxyacyl-[ACP] = a (2E)-enoyl-[ACP] + H2O. It carries out the reaction (3R)-hydroxydecanoyl-[ACP] = (2E)-decenoyl-[ACP] + H2O. The catalysed reaction is (2E)-decenoyl-[ACP] = (3Z)-decenoyl-[ACP]. It functions in the pathway lipid metabolism; fatty acid biosynthesis. In terms of biological role, necessary for the introduction of cis unsaturation into fatty acids. Catalyzes the dehydration of (3R)-3-hydroxydecanoyl-ACP to E-(2)-decenoyl-ACP and then its isomerization to Z-(3)-decenoyl-ACP. Can catalyze the dehydratase reaction for beta-hydroxyacyl-ACPs with saturated chain lengths up to 16:0, being most active on intermediate chain length. In Sodalis glossinidius (strain morsitans), this protein is 3-hydroxydecanoyl-[acyl-carrier-protein] dehydratase.